The chain runs to 198 residues: Large ribosomal subunit protein bL25 (198 aa).

This sequence belongs to the bacterial ribosomal protein bL25 family. CTC subfamily. Part of the 50S ribosomal subunit; part of the 5S rRNA/L5/L18/L25 subcomplex. Contacts the 5S rRNA. Binds to the 5S rRNA independently of L5 and L18.

Its function is as follows. This is one of the proteins that binds to the 5S RNA in the ribosome where it forms part of the central protuberance. This Chlorobium phaeobacteroides (strain DSM 266 / SMG 266 / 2430) protein is Large ribosomal subunit protein bL25.